Consider the following 142-residue polypeptide: Putative pre-16S rRNA nuclease (142 aa).

Belongs to the YqgF nuclease family.

It is found in the cytoplasm. In terms of biological role, could be a nuclease involved in processing of the 5'-end of pre-16S rRNA. The polypeptide is Putative pre-16S rRNA nuclease (Mycoplasmoides gallisepticum (strain R(low / passage 15 / clone 2)) (Mycoplasma gallisepticum)).